A 750-amino-acid polypeptide reads, in one-letter code: Polyribonucleotide nucleotidyltransferase (750 aa).

Positions 492 and 498 each coordinate Mg(2+). Residues proline 559–valine 618 enclose the KH domain. Positions glycine 628–lysine 695 constitute an S1 motif domain. The disordered stretch occupies residues glutamate 705–arginine 750. The span at lysine 717–arginine 750 shows a compositional bias: basic and acidic residues.

The protein belongs to the polyribonucleotide nucleotidyltransferase family. Mg(2+) is required as a cofactor.

It localises to the cytoplasm. It carries out the reaction RNA(n+1) + phosphate = RNA(n) + a ribonucleoside 5'-diphosphate. Functionally, involved in mRNA degradation. Catalyzes the phosphorolysis of single-stranded polyribonucleotides processively in the 3'- to 5'-direction. The protein is Polyribonucleotide nucleotidyltransferase of Oleidesulfovibrio alaskensis (strain ATCC BAA-1058 / DSM 17464 / G20) (Desulfovibrio alaskensis).